The primary structure comprises 963 residues: Protein bicaudal C homolog 1-A (963 aa).

A disordered region spans residues 1 to 48 (MAAQCESIGGDMNQSDPGSNSERSADSPVPGSEDDSPHDPEWREERFR). The segment covering 12 to 22 (MNQSDPGSNSE) has biased composition (polar residues). Residues 35–48 (DSPHDPEWREERFR) are compositionally biased toward basic and acidic residues. KH domains are found at residues 128-195 (RVTL…RVRI) and 280-344 (PVST…RQYL). Residues 592–601 (EASRQSNNHS) show a composition bias toward polar residues. Disordered stretches follow at residues 592–613 (EASR…TDPE), 668–713 (ERLL…TSQS), and 767–834 (LRRA…NKSA). Basic and acidic residues-rich tracts occupy residues 602–612 (SAEEVNSKTDP) and 683–696 (VTDK…RAAE). The span at 784–797 (ENSSLSRSNSREQL) shows a compositional bias: low complexity. Polar residues predominate over residues 812–824 (IDSSQNDYSSSIG). The SAM domain maps to 862-925 (FKGSDLPELF…LLAISELNKN (64 aa)).

It belongs to the BicC family.

In terms of biological role, putative RNA-binding protein. May be involved in regulating gene expression during embryonic development. Seems to be involved in endoderm formation. Ectopic expression results in endoderm formation in the absence of mesoderm induction. The chain is Protein bicaudal C homolog 1-A (bicc1-a) from Xenopus laevis (African clawed frog).